A 908-amino-acid polypeptide reads, in one-letter code: Collagen alpha-2(I) chain (908 aa).

Residues 1-36 (GPMGIMGPRGPPGASGAPGPAGEPGEPGQTGPAGAR) are compositionally biased toward low complexity. Disordered stretches follow at residues 1-211 (GPMG…GITG) and 227-908 (IPGP…PGPS). Residues 45-59 (AGEDGHPGKPGRPGE) are compositionally biased toward basic and acidic residues. Composition is skewed to low complexity over residues 129–158 (VGAP…SAGP), 183–197 (AGPR…VSGP), 234–249 (PGPV…RGIV), 293–309 (STGP…RGIP), 403–418 (AGIA…PGFQ), 465–474 (PAGPIGSRGP), 526–542 (RRGA…AGAN), and 569–589 (VGPA…QPGA). Positions 590-599 (KGERGTKGPK) are enriched in basic and acidic residues. A compositionally biased stretch (low complexity) spans 602–617 (NGPVGPTGPVGAAGPA). Residues 627–636 (GSRGDGGPPG) show a composition bias toward gly residues. 4 stretches are compositionally biased toward low complexity: residues 637-647 (ATGFPGAAGRT), 701-730 (AGEP…IPGS), 745-775 (EPGP…APGE), and 785-805 (PGPA…PSGP). Positions 809 to 820 (RGDKGEPGDKGP) are enriched in basic and acidic residues. A compositionally biased stretch (pro residues) spans 893-908 (AGPPGPPGPPGPPGPS).

Belongs to the fibrillar collagen family. In terms of assembly, trimers of one alpha 2(I) and two alpha 1(I) chains. Interacts (via C-terminus) with TMEM131 (via PapD-L domain); the interaction is direct and is involved in assembly and TRAPPIII ER-to-Golgi transport complex-dependent secretion of collagen. Post-translationally, prolines at the third position of the tripeptide repeating unit (G-X-Y) are hydroxylated in some or all of the chains. In terms of tissue distribution, forms the fibrils of tendon, ligaments and bones. In bones, the fibrils are mineralized with calcium hydroxyapatite.

It localises to the secreted. It is found in the extracellular space. The protein resides in the extracellular matrix. Functionally, type I collagen is a member of group I collagen (fibrillar forming collagen). This Toxodon sp protein is Collagen alpha-2(I) chain.